A 730-amino-acid polypeptide reads, in one-letter code: Exostosin-1a (730 aa).

Over 1–6 (MQAKKR) the chain is Cytoplasmic. Residues 7-27 (YLILFSAGVCLILLFYLQGPA) form a helical; Signal-anchor for type II membrane protein membrane-spanning segment. The Lumenal portion of the chain corresponds to 28 to 730 (SRRTPKRGDD…RKKYRDIERL (703 aa)). An N-linked (GlcNAc...) asparagine glycan is attached at N314. UDP-N-acetyl-alpha-D-glucosamine-binding residues include R533, D549, E550, D551, E637, D638, and R685. D551 contributes to the Mn(2+) binding site. Residues C636 and C688 are joined by a disulfide bond. D638 is a catalytic residue.

The protein belongs to the glycosyltransferase 47 family. Mn(2+) serves as cofactor.

The protein resides in the endoplasmic reticulum membrane. It catalyses the reaction 3-O-{[(1-&gt;4)-beta-D-GlcA-(1-&gt;4)-alpha-D-GlcNAc](n)-(1-&gt;4)-beta-D-GlcA-(1-&gt;3)-beta-D-Gal-(1-&gt;3)-beta-D-Gal-(1-&gt;4)-beta-D-Xyl}-L-seryl-[protein] + UDP-N-acetyl-alpha-D-glucosamine = 3-O-{alpha-D-GlcNAc-[(1-&gt;4)-beta-D-GlcA-(1-&gt;4)-alpha-D-GlcNAc](n)-(1-&gt;4)-beta-D-GlcA-(1-&gt;3)-beta-D-Gal-(1-&gt;3)-beta-D-Gal-(1-&gt;4)-beta-D-Xyl}-L-seryl-[protein] + UDP + H(+). The enzyme catalyses 3-O-{alpha-D-GlcNAc-[(1-&gt;4)-beta-D-GlcA-(1-&gt;4)-alpha-D-GlcNAc](n)-(1-&gt;4)-beta-D-GlcA-(1-&gt;3)-beta-D-Gal-(1-&gt;3)-beta-D-Gal-(1-&gt;4)-beta-D-Xyl}-L-seryl-[protein] + UDP-alpha-D-glucuronate = 3-O-{[(1-&gt;4)-beta-D-GlcA-(1-&gt;4)-alpha-D-GlcNAc](n+1)-(1-&gt;4)-beta-D-GlcA-(1-&gt;3)-beta-D-Gal-(1-&gt;3)-beta-D-Gal-(1-&gt;4)-beta-D-Xyl}-L-seryl-[protein] + UDP + H(+). Its pathway is protein modification; protein glycosylation. Functionally, glycosyltransferase required for the biosynthesis of heparan-sulfate. This Danio rerio (Zebrafish) protein is Exostosin-1a (ext1a).